Here is a 77-residue protein sequence, read N- to C-terminus: uncharacterized protein (77 aa).

Positions 11–65 (FARLRREKGLTQEEVEARSGFSQQYLSSLERGRRNPTVITLYELAQALGVSHVEL) constitute an HTH cro/C1-type domain. The H-T-H motif DNA-binding region spans 22-41 (QEEVEARSGFSQQYLSSLER).

This is an uncharacterized protein from Sinorhizobium fredii (strain NBRC 101917 / NGR234).